Reading from the N-terminus, the 350-residue chain is N-acetyl-gamma-glutamyl-phosphate reductase (350 aa).

C154 is a catalytic residue.

It belongs to the NAGSA dehydrogenase family. Type 1 subfamily.

The protein localises to the cytoplasm. It catalyses the reaction N-acetyl-L-glutamate 5-semialdehyde + phosphate + NADP(+) = N-acetyl-L-glutamyl 5-phosphate + NADPH + H(+). Its pathway is amino-acid biosynthesis; L-arginine biosynthesis; N(2)-acetyl-L-ornithine from L-glutamate: step 3/4. Catalyzes the NADPH-dependent reduction of N-acetyl-5-glutamyl phosphate to yield N-acetyl-L-glutamate 5-semialdehyde. This chain is N-acetyl-gamma-glutamyl-phosphate reductase, found in Corynebacterium efficiens (strain DSM 44549 / YS-314 / AJ 12310 / JCM 11189 / NBRC 100395).